Consider the following 240-residue polypeptide: ATP-dependent dethiobiotin synthetase BioD (240 aa).

15–20 provides a ligand contact to ATP; it reads EIGKTF. Threonine 19 lines the Mg(2+) pocket. Residue lysine 40 is part of the active site. ATP is bound by residues aspartate 57, 118–121, and 178–179; these read EGVG and NR. Residues aspartate 57 and glutamate 118 each contribute to the Mg(2+) site.

Belongs to the dethiobiotin synthetase family. Homodimer. Requires Mg(2+) as cofactor.

Its subcellular location is the cytoplasm. The catalysed reaction is (7R,8S)-7,8-diammoniononanoate + CO2 + ATP = (4R,5S)-dethiobiotin + ADP + phosphate + 3 H(+). It participates in cofactor biosynthesis; biotin biosynthesis; biotin from 7,8-diaminononanoate: step 1/2. In terms of biological role, catalyzes a mechanistically unusual reaction, the ATP-dependent insertion of CO2 between the N7 and N8 nitrogen atoms of 7,8-diaminopelargonic acid (DAPA, also called 7,8-diammoniononanoate) to form a ureido ring. In Burkholderia pseudomallei (strain K96243), this protein is ATP-dependent dethiobiotin synthetase BioD.